Consider the following 189-residue polypeptide: Peptidyl-tRNA hydrolase (189 aa).

TRNA is bound at residue tyrosine 15. Histidine 20 acts as the Proton acceptor in catalysis. 3 residues coordinate tRNA: phenylalanine 66, asparagine 68, and asparagine 114.

It belongs to the PTH family. In terms of assembly, monomer.

It is found in the cytoplasm. It catalyses the reaction an N-acyl-L-alpha-aminoacyl-tRNA + H2O = an N-acyl-L-amino acid + a tRNA + H(+). In terms of biological role, hydrolyzes ribosome-free peptidyl-tRNAs (with 1 or more amino acids incorporated), which drop off the ribosome during protein synthesis, or as a result of ribosome stalling. Functionally, catalyzes the release of premature peptidyl moieties from peptidyl-tRNA molecules trapped in stalled 50S ribosomal subunits, and thus maintains levels of free tRNAs and 50S ribosomes. This Streptococcus sanguinis (strain SK36) protein is Peptidyl-tRNA hydrolase.